The chain runs to 158 residues: Transcription elongation factor GreA (158 aa).

Residues 14-76 (LDQLKDELTH…EIESILKNVK (63 aa)) are a coiled coil.

Belongs to the GreA/GreB family.

Its function is as follows. Necessary for efficient RNA polymerase transcription elongation past template-encoded arresting sites. The arresting sites in DNA have the property of trapping a certain fraction of elongating RNA polymerases that pass through, resulting in locked ternary complexes. Cleavage of the nascent transcript by cleavage factors such as GreA or GreB allows the resumption of elongation from the new 3'terminus. GreA releases sequences of 2 to 3 nucleotides. The polypeptide is Transcription elongation factor GreA (Acholeplasma laidlawii (strain PG-8A)).